A 140-amino-acid chain; its full sequence is Actin-depolymerizing factor 10 (140 aa).

Phosphoserine is present on Ser-6. The ADF-H domain occupies 7 to 139 (GMHVSDECKL…SLDIIKGRVN (133 aa)).

Belongs to the actin-binding proteins ADF family.

It localises to the cytoplasm. Its subcellular location is the cytoskeleton. Actin-depolymerizing protein. Severs actin filaments (F-actin) and binds to actin monomers. This Arabidopsis thaliana (Mouse-ear cress) protein is Actin-depolymerizing factor 10 (ADF10).